The following is a 128-amino-acid chain: Large ribosomal subunit protein bL12 (128 aa).

Belongs to the bacterial ribosomal protein bL12 family. As to quaternary structure, homodimer. Part of the ribosomal stalk of the 50S ribosomal subunit. Forms a multimeric L10(L12)X complex, where L10 forms an elongated spine to which 2 to 4 L12 dimers bind in a sequential fashion. Binds GTP-bound translation factors.

Functionally, forms part of the ribosomal stalk which helps the ribosome interact with GTP-bound translation factors. Is thus essential for accurate translation. The chain is Large ribosomal subunit protein bL12 from Saccharopolyspora erythraea (strain ATCC 11635 / DSM 40517 / JCM 4748 / NBRC 13426 / NCIMB 8594 / NRRL 2338).